A 69-amino-acid chain; its full sequence is Small ribosomal subunit protein uS14 (69 aa).

Zn(2+) is bound by residues C33, C36, C51, and C54.

This sequence belongs to the universal ribosomal protein uS14 family. Zinc-binding uS14 subfamily. Part of the 30S ribosomal subunit. Requires Zn(2+) as cofactor.

Its function is as follows. Binds 16S rRNA, required for the assembly of 30S particles. The sequence is that of Small ribosomal subunit protein uS14 from Nanoarchaeum equitans (strain Kin4-M).